The chain runs to 580 residues: Probable alpha-1,3-mannosyltransferase MNT4 (580 aa).

The Cytoplasmic portion of the chain corresponds to 1-10 (MVLRIRRIKK). Residues 11–29 (LAPLIFTSLLSLIVLFRVY) form a helical; Signal-anchor for type II membrane protein membrane-spanning segment. At 30-580 (RQYPFSDHFE…KVVELWNKVV (551 aa)) the chain is on the lumenal side. N-linked (GlcNAc...) asparagine glycosylation is found at N132, N167, N223, and N349.

This sequence belongs to the MNN1/MNT family.

It is found in the membrane. The protein is Probable alpha-1,3-mannosyltransferase MNT4 (MNT4) of Saccharomyces cerevisiae (strain ATCC 204508 / S288c) (Baker's yeast).